The sequence spans 342 residues: Ribosomal RNA small subunit methyltransferase C (342 aa).

Belongs to the methyltransferase superfamily. RsmC family. In terms of assembly, monomer.

It localises to the cytoplasm. It catalyses the reaction guanosine(1207) in 16S rRNA + S-adenosyl-L-methionine = N(2)-methylguanosine(1207) in 16S rRNA + S-adenosyl-L-homocysteine + H(+). Specifically methylates the guanine in position 1207 of 16S rRNA in the 30S particle. The polypeptide is Ribosomal RNA small subunit methyltransferase C (Shewanella loihica (strain ATCC BAA-1088 / PV-4)).